Reading from the N-terminus, the 152-residue chain is Succinate dehydrogenase [ubiquinone] cytochrome b small subunit B, mitochondrial (152 aa).

The N-terminal 21 residues, 1–21, are a transit peptide targeting the mitochondrion; the sequence is MATLLRVSSLCRANRASAFKS. The Mitochondrial matrix portion of the chain corresponds to 22 to 56; sequence LLIRPLPCLSQDLHMVQTSQIHTSPNHHAGSKAAS. A helical membrane pass occupies residues 57-78; that stretch reads MHWTGERALSVALLGLLPAAYL. At 79-83 the chain is on the mitochondrial intermembrane side; the sequence is YPGAA. The chain crosses the membrane as a helical span at residues 84–104; sequence MDYSLAAALTLHGHWGLGQVV. A heme b-binding site is contributed by H95. Over 105 to 113 the chain is Mitochondrial matrix; sequence TDYVHGETK. Position 107 (Y107) interacts with a ubiquinone. Residues 114–135 form a helical membrane-spanning segment; the sequence is IKMANTSLFALSALTFAGLCYF. Topologically, residues 136-152 are mitochondrial intermembrane; sequence NYHDVGICKAVAMLWSL.

The protein belongs to the CybS family. In terms of assembly, component of complex II composed of four subunits: the flavoprotein (FP) SDHA, iron-sulfur protein (IP) SDHB, and a cytochrome b560 composed of SDHC and SDHD.

Its subcellular location is the mitochondrion inner membrane. The protein operates within carbohydrate metabolism; tricarboxylic acid cycle. Its function is as follows. Membrane-anchoring subunit of succinate dehydrogenase (SDH) that is involved in complex II of the mitochondrial electron transport chain and is responsible for transferring electrons from succinate to ubiquinone (coenzyme Q). SDH also oxidizes malate to the non-canonical enol form of oxaloacetate, enol-oxaloacetate. Enol-oxaloacetate, which is a potent inhibitor of the succinate dehydrogenase activity, is further isomerized into keto-oxaloacetate. The chain is Succinate dehydrogenase [ubiquinone] cytochrome b small subunit B, mitochondrial (sdhd-b) from Xenopus laevis (African clawed frog).